The chain runs to 548 residues: MASKEILFDAKAREKLSRGVDKLANAVKVTLGPKGRNVVIEKSFGSPVITKDGVSVAKEIELEDKFENMGAQMVKEVASKTSDIAGDGTTTATVLAQAIYREGVKLVAAGRNPMAIKRGIDKAVVAVTKELSDITKPTRDQKEIAQVGTISANSDTTIGNIIAEAMAKVGKEGVITVEEAKGLETTLDVVEGMKFDRGYLSPYFVTNPEKMVCELDNPYILCNEKKITSMKDMLPILEQVAKVNRPLLIIAEDVEGEALATLVVNKLRGALQVVAVKAPGFGERRKAMLEDIAILTGGEAIFEDRGIKLENVSLSSLGTAKRVVIDKENTTIVDGAGKSEDIKARVKQIRAQIEETSSDYDREKLQERLAKLVGGVAVIHVGAATETEMKEKKDRVEDALNATRAAVEEGIVPGGGTAFVRSIKVLDDIKPADDDELAGLNIIRRSLEEPLRQIAANAGYEGSIVVEKVREAKDGFGFNAASGEYEDLIKAGVIDPKKVTRIALQNAASVASLLLTTECAIAEKPEPKKDMPMPGGGMGGMGGMDGMY.

ATP is bound by residues 30 to 33 (TLGP), Lys51, 87 to 91 (DGTTT), Gly415, 479 to 481 (NAA), and Asp495.

This sequence belongs to the chaperonin (HSP60) family. Forms a cylinder of 14 subunits composed of two heptameric rings stacked back-to-back. Interacts with the co-chaperonin GroES.

The protein localises to the cytoplasm. It catalyses the reaction ATP + H2O + a folded polypeptide = ADP + phosphate + an unfolded polypeptide.. Its function is as follows. Together with its co-chaperonin GroES, plays an essential role in assisting protein folding. The GroEL-GroES system forms a nano-cage that allows encapsulation of the non-native substrate proteins and provides a physical environment optimized to promote and accelerate protein folding. The protein is Chaperonin GroEL of Lawsonia intracellularis (strain PHE/MN1-00).